The following is a 150-amino-acid chain: Leukotriene C4 synthase (150 aa).

At 1–6 (MKDEVA) the chain is on the cytoplasmic side. A helical membrane pass occupies residues 7-27 (LLASVTLLGVLLQAYFSLQVI). The Lumenal segment spans residues 28–48 (SARRAFRVSPPLTTGPPEFER). Residue arginine 30 coordinates glutathione. The Proton donor role is filled by arginine 31. Serine 36 is modified (phosphoserine). Residues 49 to 69 (IYRAQVNCSEYFPLFLAMLWV) form a helical membrane-spanning segment. Glutathione-binding positions include 51–55 (RAQVN) and 58–59 (EY). At 70 to 73 (AGIF) the chain is on the cytoplasmic side. Residues 74 to 94 (FHEGAAALCGLVYLFARLRYF) form a helical membrane-spanning segment. 93-97 (YFQGY) lines the glutathione pocket. Over 95–104 (QGYARSAQQR) the chain is Lumenal. Arginine 104 (proton acceptor) is an active-site residue. The helical transmembrane segment at 105–124 (LAPLYASARALWLLVALAAL) threads the bilayer. The Cytoplasmic portion of the chain corresponds to 125–150 (GLLAHFLPAELRAALLGQLRKLLLRS).

Belongs to the MAPEG family. As to quaternary structure, homotrimer. Interacts with ALOX5AP and ALOX5. Phosphorylation at Ser-36 by RPS6KB1 inhibits the leukotriene-C4 synthase activity.

It is found in the nucleus outer membrane. The protein resides in the endoplasmic reticulum membrane. It localises to the nucleus membrane. It catalyses the reaction leukotriene C4 = leukotriene A4 + glutathione. It carries out the reaction (13S,14S)-epoxy-(4Z,7Z,9E,11E,16Z,19Z)-docosahexaenoate + glutathione = (13R)-S-glutathionyl-(14S)-hydroxy-(4Z,7Z,9E,11E,16Z,19Z)-docosahexaenoate. Its pathway is lipid metabolism; leukotriene C4 biosynthesis. Its activity is regulated as follows. Inhibited by MK886. Its function is as follows. Catalyzes the conjugation of leukotriene A4 with reduced glutathione (GSH) to form leukotriene C4 with high specificity. Can also catalyze the transfer of a glutathionyl group from glutathione (GSH) to 13(S),14(S)-epoxy-docosahexaenoic acid to form maresin conjugate in tissue regeneration 1 (MCTR1), a bioactive lipid mediator that possess potent anti-inflammatory and proresolving actions. This Bos taurus (Bovine) protein is Leukotriene C4 synthase (LTC4S).